Consider the following 516-residue polypeptide: Na(+)/H(+) antiporter NhaB (516 aa).

12 consecutive transmembrane segments (helical) span residues 23 to 43 (LALI…PFVA), 61 to 80 (CYPL…IGMT), 97 to 117 (LLLI…LFVF), 120 to 140 (LLLG…AAAF), 144 to 164 (FLDA…FYGI), 202 to 222 (LMMH…VGEP), 238 to 258 (FFIR…LTCL), 303 to 323 (AVIG…VGLI), 348 to 368 (TEAL…AVII), 391 to 411 (LFYL…VGTV), 447 to 467 (ATPN…APLI), and 475 to 495 (VWMA…CVEF).

This sequence belongs to the NhaB Na(+)/H(+) (TC 2.A.34) antiporter family.

Its subcellular location is the cell inner membrane. The enzyme catalyses 2 Na(+)(in) + 3 H(+)(out) = 2 Na(+)(out) + 3 H(+)(in). Its function is as follows. Na(+)/H(+) antiporter that extrudes sodium in exchange for external protons. In Klebsiella pneumoniae (strain 342), this protein is Na(+)/H(+) antiporter NhaB.